Reading from the N-terminus, the 169-residue chain is Ureidoglycolate lyase (169 aa).

It belongs to the ureidoglycolate lyase family. In terms of assembly, homodimer. Ni(2+) is required as a cofactor.

The catalysed reaction is (S)-ureidoglycolate = urea + glyoxylate. The protein operates within nitrogen metabolism; (S)-allantoin degradation. Catalyzes the catabolism of the allantoin degradation intermediate (S)-ureidoglycolate, generating urea and glyoxylate. Involved in the utilization of allantoin as nitrogen source. This is Ureidoglycolate lyase from Brucella melitensis biotype 2 (strain ATCC 23457).